Here is a 271-residue protein sequence, read N- to C-terminus: 3-methyl-2-oxobutanoate hydroxymethyltransferase (271 aa).

Residues D49 and D88 each contribute to the Mg(2+) site. 3-methyl-2-oxobutanoate contacts are provided by residues 49 to 50, D88, and K118; that span reads DS. Residue E120 participates in Mg(2+) binding. E187 serves as the catalytic Proton acceptor.

The protein belongs to the PanB family. As to quaternary structure, homodecamer; pentamer of dimers. Requires Mg(2+) as cofactor.

It is found in the cytoplasm. It carries out the reaction 3-methyl-2-oxobutanoate + (6R)-5,10-methylene-5,6,7,8-tetrahydrofolate + H2O = 2-dehydropantoate + (6S)-5,6,7,8-tetrahydrofolate. It functions in the pathway cofactor biosynthesis; (R)-pantothenate biosynthesis; (R)-pantoate from 3-methyl-2-oxobutanoate: step 1/2. Its function is as follows. Catalyzes the reversible reaction in which hydroxymethyl group from 5,10-methylenetetrahydrofolate is transferred onto alpha-ketoisovalerate to form ketopantoate. The chain is 3-methyl-2-oxobutanoate hydroxymethyltransferase from Bartonella tribocorum (strain CIP 105476 / IBS 506).